We begin with the raw amino-acid sequence, 172 residues long: Ribosome maturation factor RimM (172 aa).

The region spanning 92–167 (ENEFYHSDLV…VILKLPEIIG (76 aa)) is the PRC barrel domain.

It belongs to the RimM family. As to quaternary structure, binds ribosomal protein uS19.

The protein localises to the cytoplasm. An accessory protein needed during the final step in the assembly of 30S ribosomal subunit, possibly for assembly of the head region. Essential for efficient processing of 16S rRNA. May be needed both before and after RbfA during the maturation of 16S rRNA. It has affinity for free ribosomal 30S subunits but not for 70S ribosomes. The polypeptide is Ribosome maturation factor RimM (Ehrlichia ruminantium (strain Gardel)).